The primary structure comprises 379 residues: Alkanesulfonate monooxygenase (379 aa).

It belongs to the SsuD family.

The enzyme catalyses an alkanesulfonate + FMNH2 + O2 = an aldehyde + FMN + sulfite + H2O + 2 H(+). In terms of biological role, catalyzes the desulfonation of aliphatic sulfonates. The polypeptide is Alkanesulfonate monooxygenase (Pseudomonas syringae pv. tomato (strain ATCC BAA-871 / DC3000)).